The following is a 362-amino-acid chain: Beta-ketoacyl-[acyl-carrier-protein] synthase III 2 (362 aa).

Catalysis depends on residues Cys113 and His251. The interval 252 to 256 (QANIR) is ACP-binding. Asn281 is a catalytic residue.

This sequence belongs to the thiolase-like superfamily. FabH family. As to quaternary structure, homodimer.

It is found in the cytoplasm. The enzyme catalyses malonyl-[ACP] + acetyl-CoA + H(+) = 3-oxobutanoyl-[ACP] + CO2 + CoA. It participates in lipid metabolism; fatty acid biosynthesis. Catalyzes the condensation reaction of fatty acid synthesis by the addition to an acyl acceptor of two carbons from malonyl-ACP. Catalyzes the first condensation reaction which initiates fatty acid synthesis and may therefore play a role in governing the total rate of fatty acid production. Possesses both acetoacetyl-ACP synthase and acetyl transacylase activities. Its substrate specificity determines the biosynthesis of branched-chain and/or straight-chain of fatty acids. The sequence is that of Beta-ketoacyl-[acyl-carrier-protein] synthase III 2 from Vibrio vulnificus (strain CMCP6).